Reading from the N-terminus, the 87-residue chain is Small ribosomal subunit protein bS20 (87 aa).

The interval 1–20 is disordered; the sequence is MANSAQARKRARTALKQRAH. The span at 7 to 19 shows a compositional bias: basic residues; it reads ARKRARTALKQRA.

The protein belongs to the bacterial ribosomal protein bS20 family.

Binds directly to 16S ribosomal RNA. The protein is Small ribosomal subunit protein bS20 of Chromobacterium violaceum (strain ATCC 12472 / DSM 30191 / JCM 1249 / CCUG 213 / NBRC 12614 / NCIMB 9131 / NCTC 9757 / MK).